The following is a 192-amino-acid chain: Putative 3-methyladenine DNA glycosylase (192 aa).

The protein belongs to the DNA glycosylase MPG family.

This is Putative 3-methyladenine DNA glycosylase from Bdellovibrio bacteriovorus (strain ATCC 15356 / DSM 50701 / NCIMB 9529 / HD100).